The sequence spans 88 residues: Small ribosomal subunit protein uS17 (88 aa).

It belongs to the universal ribosomal protein uS17 family. Part of the 30S ribosomal subunit.

In terms of biological role, one of the primary rRNA binding proteins, it binds specifically to the 5'-end of 16S ribosomal RNA. The sequence is that of Small ribosomal subunit protein uS17 from Ruthia magnifica subsp. Calyptogena magnifica.